Reading from the N-terminus, the 423-residue chain is Putative competence-damage inducible protein (423 aa).

The protein belongs to the CinA family.

The sequence is that of Putative competence-damage inducible protein from Streptococcus pyogenes serotype M4 (strain MGAS10750).